A 513-amino-acid chain; its full sequence is MVILPSELIGATIIYIIVYIIIQKLIATGSWRRRRLPPGPEGWPVIGALPLLGGMPHVALAKMAKKYGPIMYLKVGTCGMVVASTPNAAKAFLKTLDINFSNRPPNAGATHMAYNAQDMVFAPYGPRWKLLRKLSNLHMLGGKALENWANVRANELGHMLKSMFDASHVGERIVVADMLTFAMANMIGQVMLSKRVFVEKGKEVNEFKNMVVELMTVAGYFNIGDFIPQIAWMDLQGIEKGMKKLHKKFDDLLTKMFEEHEATSNERKGKPDFLDFIMANRDNSEGERLSITNIKALLLNLFTAGTDTSSSVIEWALTEMMKNPTIFKKAQQEMDQIIGKNRRFIESDIPNLPYLRAICKEAFRKHPSTPLNLPRVSSDACTIDGYYIPKNTRLSVNIWAIGRDPDVWENPLEFIPERFLSEKNAKIEHRGNDFELIPFGAGRRICAGTRMGIVMVEYILGTLIHSFDWKLPNDVVDINMEETFGLALQKAVPLEAIVTPRLSFDIYQSSEPF.

Residue cysteine 446 participates in heme binding.

Belongs to the cytochrome P450 family. It depends on heme as a cofactor. In terms of tissue distribution, hypocotyl tissues.

It catalyses the reaction a 3',5'-unsubstituted flavanone + 2 reduced [NADPH--hemoprotein reductase] + 2 O2 = a 3',5'-dihydroxyflavanone + 2 oxidized [NADPH--hemoprotein reductase] + 2 H2O + 2 H(+). Its pathway is pigment biosynthesis; anthocyanin biosynthesis. In terms of biological role, catalyzes the 3'5'-hydroxylation of naringenin and eriodictyol to form 5,7,3,'4',5'-pentahydroxyflavanone and 3',5'-hydroxylation of dihydrokaempferol and dihydroquercetin to form dihydromyricetin. This chain is Flavonoid 3',5'-hydroxylase (CYP75A2), found in Solanum melongena (Eggplant).